The primary structure comprises 374 residues: D-amino-acid oxidase 3 (374 aa).

The N-terminal stretch at 1–19 (MVKYDAIILGSGVLGLSIA) is a signal peptide. The FAD site is built by Ser-11, Leu-14, Lys-34, Asp-35, Ala-46, Ser-47, and Gly-51. N-linked (GlcNAc...) asparagine glycosylation is present at Asn-180. Cysteines 214 and 271 form a disulfide. The (R)-lactate site is built by Tyr-229, Tyr-246, and Arg-296. Residues Tyr-229, Tyr-246, and Arg-296 each contribute to the anthranilate site. FAD is bound by residues Arg-296, Gly-342, Gly-345, Tyr-346, and Gln-347. The Microbody targeting signal signature appears at 372–374 (AKL).

The protein belongs to the DAMOX/DASOX family. It depends on FAD as a cofactor.

It is found in the peroxisome matrix. The catalysed reaction is a D-alpha-amino acid + O2 + H2O = a 2-oxocarboxylate + H2O2 + NH4(+). Catalyzes the oxidative deamination of D-amino acids with broad substrate specificity. Enables the organism to utilize D-amino acids as a source of nutrients. Enables the organism to utilize D-asparate and D-glutamate as a nitrogen source and may also contribute to utlization of D-tryptophan, D-tyrosine and D-asparagine as a nitrogen source. Protects the organism from the toxicity of D-amino acids, including from D-glutamate. May play a role in its interaction with the host. The protein is D-amino-acid oxidase 3 of Cryptococcus deuterogattii (strain R265) (Cryptococcus gattii VGII (strain R265)).